A 56-amino-acid chain; its full sequence is AVDDYAATRYPIILVHGLTTDSKYGGVVEYXYRNPNDLTSHXXAAYVYELRSDPLD.

It belongs to the AB hydrolase superfamily. Pseudomonas lipase family.

The catalysed reaction is a triacylglycerol + H2O = a diacylglycerol + a fatty acid + H(+). In terms of biological role, this thermostable and solvent-tolerant lipase is rather nonspecific. It can synthesize both primary and secondary alcohol esters. Simple triglycerides of short and middle chain fatty acids (C&lt;13) are the preferred substrates. This Burkholderia cepacia (Pseudomonas cepacia) protein is Lipase, thermostable.